Here is a 112-residue protein sequence, read N- to C-terminus: HTH-type transcriptional regulator YodB (112 aa).

The HTH hxlR-type domain occupies 6–105 (CPKMESAFSL…WADQFCEPGD (100 aa)).

Negatively regulates yodC and azoR1 which may contribute to the degradation of aromatic compounds. Probably positively regulates the catechol-specific transcription of mhqNOP, mhqED, and mhqA. The protein is HTH-type transcriptional regulator YodB (yodB) of Bacillus subtilis (strain 168).